Consider the following 122-residue polypeptide: Small ribosomal subunit protein uS13 (122 aa).

The interval 95 to 122 (GLPVRGQRTHTNARTRKGPAKSIAGKKK) is disordered.

Belongs to the universal ribosomal protein uS13 family. In terms of assembly, part of the 30S ribosomal subunit. Forms a loose heterodimer with protein S19. Forms two bridges to the 50S subunit in the 70S ribosome.

Its function is as follows. Located at the top of the head of the 30S subunit, it contacts several helices of the 16S rRNA. In the 70S ribosome it contacts the 23S rRNA (bridge B1a) and protein L5 of the 50S subunit (bridge B1b), connecting the 2 subunits; these bridges are implicated in subunit movement. Contacts the tRNAs in the A and P-sites. The sequence is that of Small ribosomal subunit protein uS13 from Nitrobacter hamburgensis (strain DSM 10229 / NCIMB 13809 / X14).